We begin with the raw amino-acid sequence, 499 residues long: Phenylalanine--tRNA ligase alpha subunit B (499 aa).

Residues T330, 373-375, and Y413 each bind L-phenylalanine; that span reads QIE. A Mg(2+)-binding site is contributed by E415. F439 is an L-phenylalanine binding site.

The protein belongs to the class-II aminoacyl-tRNA synthetase family. Phe-tRNA synthetase alpha subunit type 2 subfamily. Heterotetramer; dimer of two heterodimers formed by alpha and beta subunits. It depends on Mg(2+) as a cofactor.

It localises to the cytoplasm. It catalyses the reaction tRNA(Phe) + L-phenylalanine + ATP = L-phenylalanyl-tRNA(Phe) + AMP + diphosphate + H(+). The polypeptide is Phenylalanine--tRNA ligase alpha subunit B (farsa-b) (Xenopus laevis (African clawed frog)).